Consider the following 258-residue polypeptide: UPF0246 protein VV1_0535 (258 aa).

This sequence belongs to the UPF0246 family.

This Vibrio vulnificus (strain CMCP6) protein is UPF0246 protein VV1_0535.